The primary structure comprises 43 residues: Protein PsbN (43 aa).

The chain crosses the membrane as a helical span at residues 5–27 (TIFSIFFSCLLIGLTGYSLYTSF).

It belongs to the PsbN family.

Its subcellular location is the plastid. The protein localises to the chloroplast thylakoid membrane. Functionally, may play a role in photosystem I and II biogenesis. This Mesostigma viride (Green alga) protein is Protein PsbN.